A 259-amino-acid chain; its full sequence is Malonyl-[acyl-carrier protein] O-methyltransferase 2 (259 aa).

The protein belongs to the methyltransferase superfamily.

It catalyses the reaction malonyl-[ACP] + S-adenosyl-L-methionine = malonyl-[ACP] methyl ester + S-adenosyl-L-homocysteine. Its pathway is cofactor biosynthesis; biotin biosynthesis. Its function is as follows. Converts the free carboxyl group of a malonyl-thioester to its methyl ester by transfer of a methyl group from S-adenosyl-L-methionine (SAM). It allows to synthesize pimeloyl-ACP via the fatty acid synthetic pathway. This Ilyobacter polytropus (strain ATCC 51220 / DSM 2926 / LMG 16218 / CuHBu1) protein is Malonyl-[acyl-carrier protein] O-methyltransferase 2.